Reading from the N-terminus, the 186-residue chain is Probable chorismate pyruvate-lyase (186 aa).

Substrate contacts are provided by arginine 78, leucine 116, and glutamate 175.

This sequence belongs to the UbiC family.

Its subcellular location is the cytoplasm. It carries out the reaction chorismate = 4-hydroxybenzoate + pyruvate. It participates in cofactor biosynthesis; ubiquinone biosynthesis. Functionally, removes the pyruvyl group from chorismate, with concomitant aromatization of the ring, to provide 4-hydroxybenzoate (4HB) for the ubiquinone pathway. This is Probable chorismate pyruvate-lyase from Psychromonas ingrahamii (strain DSM 17664 / CCUG 51855 / 37).